The sequence spans 183 residues: Nucleoside triphosphate pyrophosphatase (183 aa).

Asp-71 (proton acceptor) is an active-site residue.

It belongs to the Maf family. A divalent metal cation is required as a cofactor.

It localises to the cytoplasm. It catalyses the reaction a ribonucleoside 5'-triphosphate + H2O = a ribonucleoside 5'-phosphate + diphosphate + H(+). The enzyme catalyses a 2'-deoxyribonucleoside 5'-triphosphate + H2O = a 2'-deoxyribonucleoside 5'-phosphate + diphosphate + H(+). Functionally, nucleoside triphosphate pyrophosphatase. May have a dual role in cell division arrest and in preventing the incorporation of modified nucleotides into cellular nucleic acids. This Campylobacter jejuni subsp. doylei (strain ATCC BAA-1458 / RM4099 / 269.97) protein is Nucleoside triphosphate pyrophosphatase.